Reading from the N-terminus, the 141-residue chain is Large ribosomal subunit protein uL11 (141 aa).

It belongs to the universal ribosomal protein uL11 family. Part of the ribosomal stalk of the 50S ribosomal subunit. Interacts with L10 and the large rRNA to form the base of the stalk. L10 forms an elongated spine to which L12 dimers bind in a sequential fashion forming a multimeric L10(L12)X complex. In terms of processing, one or more lysine residues are methylated.

Its function is as follows. Forms part of the ribosomal stalk which helps the ribosome interact with GTP-bound translation factors. The protein is Large ribosomal subunit protein uL11 of Ruegeria pomeroyi (strain ATCC 700808 / DSM 15171 / DSS-3) (Silicibacter pomeroyi).